The following is a 341-amino-acid chain: Follistatin (341 aa).

A signal peptide spans 1-29 (MLNERIQPGMIFLLTVSLCHFMEYRAVQA). One can recognise a TB domain in the interval 30-103 (GNCWLQQSKN…TCENVDCGPG (74 aa)). 8 cysteine pairs are disulfide-bonded: Cys-32/Cys-55, Cys-42/Cys-88, Cys-56/Cys-91, Cys-95/Cys-106, Cys-100/Cys-116, Cys-118/Cys-150, Cys-122/Cys-143, and Cys-132/Cys-164. Asn-72 carries N-linked (GlcNAc...) asparagine glycosylation. A Follistatin-like 1 domain is found at 94–117 (TCENVDCGPGKKCKMNKKNKPRCV). 3 Kazal-like domains span residues 100-166 (CGPG…KCKK), 186-241 (NAYC…KCIK), and 264-318 (RGRC…SCNS). Asn-124 is a glycosylation site (N-linked (GlcNAc...) asparagine). One can recognise a Follistatin-like 2 domain in the interval 167 to 190 (TCRDVLCPGSSSCVVDQTNNAYCV). 3 disulfides stabilise this stretch: Cys-192–Cys-225, Cys-196–Cys-218, and Cys-207–Cys-239. The Follistatin-like 3 domain occupies 244–268 (SCEDIQCSAGKKCLWDSRVGRGRCA). 3 disulfide bridges follow: Cys-270-Cys-302, Cys-274-Cys-295, and Cys-284-Cys-316. N-linked (GlcNAc...) asparagine glycosylation occurs at Asn-288. The span at 321–333 (EDTEEEEEEEEPD) shows a compositional bias: acidic residues. Residues 321-341 (EDTEEEEEEEEPDYSFVISSW) form a disordered region.

Monomer. In terms of tissue distribution, spemann organizer and notochord.

The protein localises to the secreted. Its function is as follows. Binds directly to activin and functions as an activin antagonist which plays a role in neural induction. The short isoform is a more potent inhibitor of activin than the long isoform. Specific inhibitor of the biosynthesis and secretion of pituitary follicle stimulating hormone (FSH). This Xenopus laevis (African clawed frog) protein is Follistatin (fst).